The primary structure comprises 448 residues: Omega-6 fatty acid desaturase, chloroplastic (448 aa).

The N-terminal 69 residues, 1 to 69, are a transit peptide targeting the chloroplast; sequence MASRIADSLF…VKRRIGCIKA (69 aa). N-acetylvaline is present on Val-70. 2 consecutive transmembrane segments (helical) span residues 124–144 and 149–169; these read LKALKSVLISVTSYTLGLFMI and WYLLPLAWAWTGTAITGFFVI. Residues 171–175 carry the Histidine box-1 motif; that stretch reads HDCAH. The short motif at 207 to 211 is the Histidine box-2 element; the sequence is HDRHH. 2 helical membrane passes run 282–302 and 303–323; these read VFAFMAVGWPLIVYKVGILGW and VKFWLMPWLGYHFWMSTFTMV. The Histidine box-3 motif lies at 367 to 371; the sequence is HIPHH.

Belongs to the fatty acid desaturase type 1 family.

Its subcellular location is the plastid. The protein resides in the chloroplast inner membrane. The catalysed reaction is a (9Z)-octadecenoyl-containing glycerolipid + 2 reduced [2Fe-2S]-[ferredoxin] + O2 + 2 H(+) = a (9Z,12Z)-octadecadienoyl-containing glycerolipid + 2 oxidized [2Fe-2S]-[ferredoxin] + 2 H2O. It participates in lipid metabolism; polyunsaturated fatty acid biosynthesis. Its function is as follows. Chloroplast omega-6 fatty acid desaturase introduces the second double bond in the biosynthesis of 16:3 and 18:3 fatty acids, important constituents of plant membranes. It is thought to use ferredoxin as an electron donor and to act on fatty acids esterified to galactolipids, sulfolipids and phosphatidylglycerol. This Arabidopsis thaliana (Mouse-ear cress) protein is Omega-6 fatty acid desaturase, chloroplastic.